The primary structure comprises 258 residues: Venom plasminogen activator Haly-PA (258 aa).

A signal peptide spans 1–18 (MALIRVLANLLILQLSYA). Residues 19–24 (QKSSEL) constitute a propeptide that is removed on maturation. Positions 25–249 (VVGGDECNIN…HLDWIKSIIA (225 aa)) constitute a Peptidase S1 domain. Cystine bridges form between Cys31-Cys163, Cys50-Cys66, Cys98-Cys256, Cys142-Cys210, Cys174-Cys189, and Cys200-Cys225. A glycan (N-linked (GlcNAc...) asparagine) is linked at Asn44. Active-site charge relay system residues include His65 and Asp110. Ser204 acts as the Charge relay system in catalysis.

It belongs to the peptidase S1 family. Snake venom subfamily. In terms of assembly, monomer. In terms of processing, glycosylated. In terms of tissue distribution, expressed by the venom gland.

Its subcellular location is the secreted. Its function is as follows. Snake venom serine protease that activates plasminogen. Displays indirect fibrino(geno)lytic activity through conversion of plasminogen to plasmin. Shows a preferential cleavage at Arg-|-Xaa instead of Lys-|-Xaa bonds. In Gloydius brevicauda (Korean slamosa snake), this protein is Venom plasminogen activator Haly-PA.